Reading from the N-terminus, the 231-residue chain is Dephospho-CoA kinase domain-containing protein (231 aa).

The 205-residue stretch at 3–207 (LVGLTGGIAS…HSLEYLPLRL (205 aa)) folds into the DPCK domain. 8 to 15 (GGIASGKS) contributes to the ATP binding site.

Belongs to the CoaE family.

The polypeptide is Dephospho-CoA kinase domain-containing protein (DCAKD) (Bos taurus (Bovine)).